The primary structure comprises 395 residues: Nucleoside diphosphate kinase homolog 7 (395 aa).

Residues Gln-22–Lys-110 enclose the DM10 domain.

The protein belongs to the NDK family. In terms of assembly, component of sperm flagellar doublet microtubules. Component of the gamma-tubulin ring complex. In terms of tissue distribution, widely expressed. Expressed in the flagellum of epididymal sperm but not in testicular sperm (at protein level).

It is found in the cytoplasm. The protein resides in the cytoskeleton. Its subcellular location is the microtubule organizing center. It localises to the centrosome. The protein localises to the nucleus. It is found in the spindle. The protein resides in the cilium axoneme. Its subcellular location is the flagellum axoneme. It localises to the cell projection. The protein localises to the cilium. In terms of biological role, possesses an intrinsic kinase activity. Displays 3'-5' exonuclease activity with a preference for single-stranded DNA. Does not seem to have nucleoside diphosphate kinase activity. Functional component of the gamma-tubulin ring complex, implicated in the regulation of the microtubule-nucleating activity of the gamma-tubulin ring complex in centrosomes, in a kinase activity-dependent manner. Part of the dynein-decorated doublet microtubules (DMTs) in cilia axoneme, which is required for motile cilia beating. The sequence is that of Nucleoside diphosphate kinase homolog 7 (Nme7) from Rattus norvegicus (Rat).